Reading from the N-terminus, the 120-residue chain is Spermidine export protein MdtJ (120 aa).

Helical transmembrane passes span 1-21 (MFYW…TLSM), 31-51 (AGFI…SFAV), 54-74 (IALG…ITIF), and 81-101 (EALS…IVLI).

It belongs to the drug/metabolite transporter (DMT) superfamily. Small multidrug resistance (SMR) (TC 2.A.7.1) family. MdtJ subfamily. Forms a complex with MdtI.

It is found in the cell inner membrane. In terms of biological role, catalyzes the excretion of spermidine. The sequence is that of Spermidine export protein MdtJ from Salmonella paratyphi A (strain ATCC 9150 / SARB42).